A 364-amino-acid polypeptide reads, in one-letter code: Spermidine/putrescine import ATP-binding protein PotA (364 aa).

The ABC transporter domain maps to 5-235 (LSLKSVSKSY…PVNRFVADFI (231 aa)). 37–44 (GPSGCGKT) is a binding site for ATP.

It belongs to the ABC transporter superfamily. Spermidine/putrescine importer (TC 3.A.1.11.1) family. In terms of assembly, the complex is composed of two ATP-binding proteins (PotA), two transmembrane proteins (PotB and PotC) and a solute-binding protein (PotD).

It is found in the cell membrane. The enzyme catalyses ATP + H2O + polyamine-[polyamine-binding protein]Side 1 = ADP + phosphate + polyamineSide 2 + [polyamine-binding protein]Side 1.. In terms of biological role, part of the ABC transporter complex PotABCD involved in spermidine/putrescine import. Responsible for energy coupling to the transport system. The polypeptide is Spermidine/putrescine import ATP-binding protein PotA (Staphylococcus aureus (strain USA300)).